A 333-amino-acid polypeptide reads, in one-letter code: MSLRSKLSSLREYLTPINHNSNFVTTGEISPEEFVKAGDYLVYKFPTWQWGNDCPKNLQKSFLPPDKQYLVTRHVPSYQRASNYLTGEDKKGANPEEDDEEEEEEDEEGWVKSKKIHKVIDDTHDSQINKGEEINDIDDFIDENAEEQEHDQIGDHELDDDEFDDLDIINDSKNNKLRRFDLYITYSTSYRVPKLYLVGFDSNGIPLLPQQMFEDINSDYKDKTATIENLPVAHNTTSVSIHPCKHSSVMKVLMKHSKLNKKNLQQKDESLSDDLSKLSVNEKKTQDEHSQINNDDKEEEEEGIRVDHYLIIFLKFIASVTPGIEYDYTMDAL.

A disordered region spans residues 81-112 (ASNYLTGEDKKGANPEEDDEEEEEEDEEGWVK). A flexible region region spans residues 84–174 (YLTGEDKKGA…DLDIINDSKN (91 aa)). Over residues 95–108 (PEEDDEEEEEEDEE) the composition is skewed to acidic residues. Catalysis depends on C244, which acts as the Glycyl thioester intermediate. The tract at residues 248 to 308 (SVMKVLMKHS…EEEEGIRVDH (61 aa)) is handle region. Residues 278-290 (LSVNEKKTQDEHS) are compositionally biased toward basic and acidic residues. Residues 278–300 (LSVNEKKTQDEHSQINNDDKEEE) are disordered.

It belongs to the ATG3 family. Monomer. Interacts with ATG8 through an intermediate thioester bond through the C-terminal Gly of ATG8. Also interacts with the 40 amino acid C-terminal region of the E1-like ATG7 enzyme. Also interacts with the ATG12-ATG5 conjugate.

The protein localises to the cytoplasm. In terms of biological role, E2 conjugating enzyme required for the cytoplasm to vacuole transport (Cvt) and autophagy. Required for selective autophagic degradation of the nucleus (nucleophagy) as well as for mitophagy which contributes to regulate mitochondrial quantity and quality by eliminating the mitochondria to a basal level to fulfill cellular energy requirements and preventing excess ROS production. Responsible for the E2-like covalent binding of phosphatidylethanolamine to the C-terminal Gly of ATG8. The ATG12-ATG5 conjugate plays a role of an E3 and promotes the transfer of ATG8 from ATG3 to phosphatidylethanolamine (PE). This step is required for the membrane association of ATG8. The formation of the ATG8-phosphatidylethanolamine conjugate is essential for autophagy and for the cytoplasm to vacuole transport (Cvt). The ATG8-PE conjugate mediates tethering between adjacent membranes and stimulates membrane hemifusion, leading to expansion of the autophagosomal membrane during autophagy. This Candida albicans (strain SC5314 / ATCC MYA-2876) (Yeast) protein is Autophagy-related protein 3 (ATG3).